Reading from the N-terminus, the 127-residue chain is MVQGPNTHRNLDDSPAGPLLILSPCAGTPTRSPAAPDAPDFRLPCHFGRPTRKRGPTTPPLSSPGKLCATGPRRVYSVTVCCGNCGKELTFAVKTSSTSLLGFEHLLNSDLDLLCPRCESRERHGKR.

An E7 terminal domain region spans residues 2–56; the sequence is VQGPNTHRNLDDSPAGPLLILSPCAGTPTRSPAAPDAPDFRLPCHFGRPTRKRGP. A disordered region spans residues 23–66; it reads SPCAGTPTRSPAAPDAPDFRLPCHFGRPTRKRGPTTPPLSSPGK. A zinc finger spans residues 82-118; that stretch reads CGNCGKELTFAVKTSSTSLLGFEHLLNSDLDLLCPRC. A Nuclear export signal motif is present at residues 100 to 108; that stretch reads LLGFEHLLN.

Belongs to the papillomaviridae E7 protein family. Homodimer. Homooligomer. Interacts with host RB1; this interaction induces dissociation of RB1-E2F1 complex thereby disrupting RB1 activity. Interacts with host EP300; this interaction represses EP300 transcriptional activity. Interacts with protein E2; this interaction inhibits E7 oncogenic activity. Interacts with host TMEM173/STING; this interaction impairs the ability of TMEM173/STING to sense cytosolic DNA and promote the production of type I interferon (IFN-alpha and IFN-beta). In terms of processing, highly phosphorylated.

Its subcellular location is the host cytoplasm. It is found in the host nucleus. Plays a role in viral genome replication by driving entry of quiescent cells into the cell cycle. Stimulation of progression from G1 to S phase allows the virus to efficiently use the cellular DNA replicating machinery to achieve viral genome replication. E7 protein has both transforming and trans-activating activities. Induces the disassembly of the E2F1 transcription factor from RB1, with subsequent transcriptional activation of E2F1-regulated S-phase genes. Interferes with host histone deacetylation mediated by HDAC1 and HDAC2, leading to transcription activation. Also plays a role in the inhibition of both antiviral and antiproliferative functions of host interferon alpha. Interaction with host TMEM173/STING impairs the ability of TMEM173/STING to sense cytosolic DNA and promote the production of type I interferon (IFN-alpha and IFN-beta). The sequence is that of Protein E7 from Bovine papillomavirus type 1.